A 630-amino-acid chain; its full sequence is MTDTNHSSMRQHSLQSLAIAAIGVVFGDIGTSPLYSLKEAFSPAHGIPLTPSAILGVISLLFWAIILVVGIKYVLFVMRADNNGEGGVLALMALSLRPLNPKSRITGLMMALGIFGACMFYGDAVITPAISVMSAVEGLEVATPQLSHLVLPITIVILIALFWIQRHGTATVGKLFGPIMVLWFVTIAVLGIYHIARAPMIVSAINPYYAFSFMSEHVLLAYVVLGSVVLVLTGAEALYADMGHFGAKPIRLAAYVLVMPSLVLNYFGQGALLLLDPKAIENPFFLLAPQWAALPLVVLSTVATVIASQAVISGAYSLTSQAIQLGYVPRMKILHTSELAIGQIYVPVVNWLLLFVILCIVIGFKSSDNLAAAYGIAVTATMVITTILAAVVMVKVWNWNKLLVAMIIGVFLVIDLGFFGANLLKVEQGGWLPLGIGALLFFLLMTWYKGRHIVKERTAADGIPLAPFLQGLLAHPPHRVSGTAIYLTGNDTLVPVSLLHNLKHNKVLHERTIFMTFVTRDIPYVKDHERVTVHDAGEGLYIVKAEYGFNETPDVKAVLEEVARQRGMTFELMDTSFFLARETVVPTHLPGMSIWRERVFAWMHQNAAKPTDFFAIPANRVVELGTKIEI.

12 consecutive transmembrane segments (helical) span residues 17-37, 51-71, 105-125, 144-164, 175-195, 218-238, 255-275, 283-303, 344-364, 374-394, 402-422, and 428-448; these read LAIA…LYSL, PSAI…VVGI, ITGL…GDAV, PQLS…LFWI, LFGP…IYHI, VLLA…AEAL, YVLV…LLLL, PFFL…STVA, IYVP…VIGF, YGIA…VVMV, LLVA…FGAN, and QGGW…MTWY.

This sequence belongs to the HAK/KUP transporter (TC 2.A.72) family.

It localises to the cell inner membrane. It carries out the reaction K(+)(in) + H(+)(in) = K(+)(out) + H(+)(out). Functionally, transport of potassium into the cell. Likely operates as a K(+):H(+) symporter. This Burkholderia pseudomallei (strain K96243) protein is Probable potassium transport system protein Kup.